A 315-amino-acid chain; its full sequence is MEKLRIIFMGTPEFAVGILDTIIKNNYDVVGVITAADKPAGRGQKIKYSAVKEYALANNLTLLQPTNLKDESFLAELKALNANLQIVVAFRMLPKVVWEMPNLGTFNLHASLLPNYRGAAPINWAIINGETKTGVTTFFIDDKIDTGAMILNSEIAIEPAENAGQLHDRLMNLGSTTVIDTLKVIENGNVITTIQEDNNDIKTAYKLNKENCKIDWTKSGDEINNLIRGLSPYPAAWCFLKDKNEELSIKIYEAKLLEEAHSYEAGKLISGKKEIKIAIKNGFIQLLSLQLPGKKRMQVAELLNGITFSDEAKVY.

A (6S)-5,6,7,8-tetrahydrofolate-binding site is contributed by 111–114; the sequence is SLLP.

It belongs to the Fmt family.

It carries out the reaction L-methionyl-tRNA(fMet) + (6R)-10-formyltetrahydrofolate = N-formyl-L-methionyl-tRNA(fMet) + (6S)-5,6,7,8-tetrahydrofolate + H(+). Functionally, attaches a formyl group to the free amino group of methionyl-tRNA(fMet). The formyl group appears to play a dual role in the initiator identity of N-formylmethionyl-tRNA by promoting its recognition by IF2 and preventing the misappropriation of this tRNA by the elongation apparatus. This is Methionyl-tRNA formyltransferase from Flavobacterium johnsoniae (strain ATCC 17061 / DSM 2064 / JCM 8514 / BCRC 14874 / CCUG 350202 / NBRC 14942 / NCIMB 11054 / UW101) (Cytophaga johnsonae).